The chain runs to 181 residues: Nucleoside diphosphate kinase, mitochondrial (181 aa).

Residues 1 to 10 (MFRGGTHRLR) show a composition bias toward basic residues. The interval 1 to 22 (MFRGGTHRLRGQPGLSLPHGPR) is disordered. Residues 1–24 (MFRGGTHRLRGQPGLSLPHGPRCY) constitute a mitochondrion transit peptide. Positions 40, 88, 116, 122, 133, and 143 each coordinate ATP. His-146 (pros-phosphohistidine intermediate) is an active-site residue.

This sequence belongs to the NDK family. The cofactor is Mg(2+). As to expression, highest levels in the liver and kidney with lower levels in the heart, brain and breast muscle.

It localises to the mitochondrion intermembrane space. It is found in the mitochondrion matrix. The enzyme catalyses a 2'-deoxyribonucleoside 5'-diphosphate + ATP = a 2'-deoxyribonucleoside 5'-triphosphate + ADP. The catalysed reaction is a ribonucleoside 5'-diphosphate + ATP = a ribonucleoside 5'-triphosphate + ADP. Feedback inhibition by ADP. Major role in the synthesis of nucleoside triphosphates other than ATP. The ATP gamma phosphate is transferred to the NDP beta phosphate via a ping-pong mechanism, using a phosphorylated active-site intermediate. Through the catalyzed exchange of gamma-phosphate between di- and triphosphonucleosides participates in regulation of intracellular nucleotide homeostasis. Binds to anionic phospholipids, predominantly to cardiolipin; the binding inhibits its phosphotransfer activity. Acts as a mitochondria-specific NDK coupled to respiration. Promotes the redistribution of cardiolipin between the mitochondrial inner membrane and outer membrane which is implicated in pro-apoptotic signaling. This chain is Nucleoside diphosphate kinase, mitochondrial (NME4), found in Columba livia (Rock dove).